A 174-amino-acid polypeptide reads, in one-letter code: Inner membrane protein p22 (174 aa).

Residues 1–7 (MLHIKMT) are Intravirion-facing. A helical transmembrane segment spans residues 8 to 28 (ISTLLIALIVLLIIILVVFLY). At 29–174 (HKKQQPPKKV…LYLPRNHKYA (146 aa)) the chain is on the virion surface side.

The protein belongs to the asfivirus inner membrane protein p22 family.

It is found in the virion membrane. The protein localises to the host cell membrane. The sequence is that of Inner membrane protein p22 from African swine fever virus (isolate Pig/Kenya/KEN-50/1950) (ASFV).